Here is a 696-residue protein sequence, read N- to C-terminus: Transcriptional regulatory protein pro1 (696 aa).

Residues 1-48 (MSTQSPNHHEDITKTSSVNMTTTTTTTKTKAAAKAGTNAAPKQKTQMH) form a disordered region. Residues 21–40 (TTTTTTTKTKAAAKAGTNAA) show a composition bias toward low complexity. A DNA-binding region (zn(2)-C6 fungal-type) is located at residues 55-82 (CYTCRLRRKKCDEGSPMCTACKHLGLCC). Residues 112 to 145 (LSEKSSHTIQTSINTPPGLSHSLPTSATFSDPLD) form a disordered region. Residues 118-140 (HTIQTSINTPPGLSHSLPTSATF) show a composition bias toward polar residues.

The protein resides in the nucleus. May be involved in fruiting body development. The protein is Transcriptional regulatory protein pro1 (adv-1) of Neurospora crassa (strain ATCC 24698 / 74-OR23-1A / CBS 708.71 / DSM 1257 / FGSC 987).